The primary structure comprises 434 residues: Probable zinc metalloprotease PTRG_04772 (434 aa).

Asparagine 88 carries N-linked (GlcNAc...) asparagine glycosylation. Residues histidine 111, aspartate 131, and glutamate 164 each coordinate Zn(2+). Asparagine 179 carries N-linked (GlcNAc...) asparagine glycosylation. Aspartate 191 is a Zn(2+) binding site. Asparagine 220, asparagine 299, asparagine 347, asparagine 353, asparagine 390, and asparagine 395 each carry an N-linked (GlcNAc...) asparagine glycan. The Fibronectin type-III domain maps to 340–433; it reads SPTNVGINTT…LPFPFGCARN (94 aa).

It belongs to the peptidase M28 family. M28B subfamily. Zn(2+) is required as a cofactor.

It is found in the secreted. The protein is Probable zinc metalloprotease PTRG_04772 of Pyrenophora tritici-repentis (strain Pt-1C-BFP) (Wheat tan spot fungus).